The primary structure comprises 251 residues: Endoglucanase CX (251 aa).

This sequence belongs to the glycosyl hydrolase 9 (cellulase E) family.

The catalysed reaction is Endohydrolysis of (1-&gt;4)-beta-D-glucosidic linkages in cellulose, lichenin and cereal beta-D-glucans.. Functionally, degrades carboxymethylcellulose (CMC). In Prunus persica (Peach), this protein is Endoglucanase CX.